We begin with the raw amino-acid sequence, 154 residues long: Putative pre-16S rRNA nuclease (154 aa).

The protein belongs to the YqgF nuclease family.

Its subcellular location is the cytoplasm. In terms of biological role, could be a nuclease involved in processing of the 5'-end of pre-16S rRNA. This is Putative pre-16S rRNA nuclease from Ruegeria pomeroyi (strain ATCC 700808 / DSM 15171 / DSS-3) (Silicibacter pomeroyi).